The primary structure comprises 128 residues: Con-Ins F2 (128 aa).

The N-terminal stretch at 1 to 24 (MTTSSYFLLVALGLLLYVCRSSFG) is a signal peptide. 4 cysteine pairs are disulfide-bonded: Cys-29-Cys-104, Cys-41-Cys-107, Cys-53-Cys-120, and Cys-106-Cys-111. Residues 59–89 (LQGGTGKKRGRASLLRKRRAFLSMLKARAKR) constitute a propeptide, c peptide. 4-carboxyglutamate; partial is present on Glu-115. Ser-127 carries the serine amide modification.

It belongs to the insulin family. Heterodimer of A and B chains; disulfide-linked. Expressed by the venom gland.

The protein localises to the secreted. Its function is as follows. This venom insulin facilitates prey capture by rapidly inducing hypoglycemic shock. Intraperitoneal injection of this peptide into zebrafish lowers blood glucose with the same potency than human insulin. In vivo, when applied to water, this peptide reduces overall locomotor activity of zebrafish larvae, observed as a significant decrease in the percentage of time spent swimming and movement frequency. The protein is Con-Ins F2 of Conus floridulus (Cone snail).